The following is a 211-amino-acid chain: Protein-L-isoaspartate O-methyltransferase (211 aa).

Serine 59 is an active-site residue.

Belongs to the methyltransferase superfamily. L-isoaspartyl/D-aspartyl protein methyltransferase family.

Its subcellular location is the cytoplasm. The enzyme catalyses [protein]-L-isoaspartate + S-adenosyl-L-methionine = [protein]-L-isoaspartate alpha-methyl ester + S-adenosyl-L-homocysteine. In terms of biological role, catalyzes the methyl esterification of L-isoaspartyl residues in peptides and proteins that result from spontaneous decomposition of normal L-aspartyl and L-asparaginyl residues. It plays a role in the repair and/or degradation of damaged proteins. The chain is Protein-L-isoaspartate O-methyltransferase from Ignicoccus hospitalis (strain KIN4/I / DSM 18386 / JCM 14125).